The sequence spans 48 residues: ATP synthase protein 8 (48 aa).

A helical transmembrane segment spans residues 4–24 (LVPFFFVNQVVYAFVILTVLI).

It belongs to the ATPase protein 8 family. In terms of assembly, F-type ATPases have 2 components, CF(1) - the catalytic core - and CF(0) - the membrane proton channel.

Its subcellular location is the mitochondrion membrane. In terms of biological role, mitochondrial membrane ATP synthase (F(1)F(0) ATP synthase or Complex V) produces ATP from ADP in the presence of a proton gradient across the membrane which is generated by electron transport complexes of the respiratory chain. F-type ATPases consist of two structural domains, F(1) - containing the extramembraneous catalytic core and F(0) - containing the membrane proton channel, linked together by a central stalk and a peripheral stalk. During catalysis, ATP synthesis in the catalytic domain of F(1) is coupled via a rotary mechanism of the central stalk subunits to proton translocation. Part of the complex F(0) domain. Minor subunit located with subunit a in the membrane. This chain is ATP synthase protein 8 (atp8), found in Aspergillus amstelodami.